A 92-amino-acid chain; its full sequence is Small ribosomal subunit protein uS19 (92 aa).

The protein belongs to the universal ribosomal protein uS19 family.

Its function is as follows. Protein S19 forms a complex with S13 that binds strongly to the 16S ribosomal RNA. This Acidiphilium cryptum (strain JF-5) protein is Small ribosomal subunit protein uS19.